The chain runs to 307 residues: Glycine--tRNA ligase alpha subunit (307 aa).

This sequence belongs to the class-II aminoacyl-tRNA synthetase family. Tetramer of two alpha and two beta subunits.

The protein resides in the cytoplasm. The catalysed reaction is tRNA(Gly) + glycine + ATP = glycyl-tRNA(Gly) + AMP + diphosphate. In Xylella fastidiosa (strain 9a5c), this protein is Glycine--tRNA ligase alpha subunit (glyQ).